Reading from the N-terminus, the 275-residue chain is Transcriptional coregulator psa-3 (275 aa).

An MEIS N-terminal domain is found at 91–161 (TDDIKRLFQS…RRTVCHEALV (71 aa)). A disordered region spans residues 239–275 (QLPPNFLKPSNEKSPEKSEEEKSQKPSSSPKSPSLSD). Residues 248–262 (SNEKSPEKSEEEKSQ) show a composition bias toward basic and acidic residues. The span at 263–275 (KPSSSPKSPSLSD) shows a compositional bias: low complexity.

As to quaternary structure, interacts with homeobox protein ceh-20; the interaction is direct, facilitates nuclear localization of ceh-20 and may stabilize interaction of a ceh-20-nob-1 complex with DNA.

The protein resides in the nucleus. Its function is as follows. Probable transcription coregulator. Required for asymmetric cell divisions of the T hypodermal cells, and cell fate determination, in concert with homeobox proteins nob-1 and ceh-20. Acts downstream of the Wnt signaling pathway, and of ceh-20 and nob-1. This chain is Transcriptional coregulator psa-3, found in Caenorhabditis elegans.